A 206-amino-acid polypeptide reads, in one-letter code: Imidazole glycerol phosphate synthase subunit hisH (206 aa).

Residues 2-206 (KVGLVDYSMG…REVMKKAASL (205 aa)) form the Glutamine amidotransferase type-1 domain. Cys-80 serves as the catalytic Nucleophile. Catalysis depends on residues His-184 and Glu-186.

As to quaternary structure, heterodimer of hisH and hisF.

The protein localises to the plastid. The protein resides in the chloroplast. It catalyses the reaction 5-[(5-phospho-1-deoxy-D-ribulos-1-ylimino)methylamino]-1-(5-phospho-beta-D-ribosyl)imidazole-4-carboxamide + L-glutamine = D-erythro-1-(imidazol-4-yl)glycerol 3-phosphate + 5-amino-1-(5-phospho-beta-D-ribosyl)imidazole-4-carboxamide + L-glutamate + H(+). The catalysed reaction is L-glutamine + H2O = L-glutamate + NH4(+). It participates in amino-acid biosynthesis; L-histidine biosynthesis; L-histidine from 5-phospho-alpha-D-ribose 1-diphosphate: step 5/9. In terms of biological role, IGPS catalyzes the conversion of PRFAR and glutamine to IGP, AICAR and glutamate. The HisH subunit catalyzes the hydrolysis of glutamine to glutamate and ammonia as part of the synthesis of IGP and AICAR. The resulting ammonia molecule is channeled to the active site of HisF. This chain is Imidazole glycerol phosphate synthase subunit hisH, found in Cyanidioschyzon merolae (strain NIES-3377 / 10D) (Unicellular red alga).